The following is a 439-amino-acid chain: Cytochrome b-c1 complex reductase subunit, mitochondrial (439 aa).

A mitochondrion-targeting transit peptide spans 1 to 17; it reads MIRGSSALKSLTSRRLY.

The protein belongs to the peptidase M16 family. UQCRC1/QCR1 subfamily. As to quaternary structure, component of the ubiquinol-cytochrome c oxidoreductase (cytochrome b-c1 complex, complex III, CIII), a multisubunit enzyme composed of 10 subunits. The complex is composed of 3 respiratory subunits cytochrome b (COB), cytochrome c1 (CYT1) and Rieske protein (RIP1), 2 core protein subunits COR1 and QCR2, and 5 low-molecular weight protein subunits QCR6, QCR7, QCR8, QCR9 and QCR10. The complex exists as an obligatory dimer and forms supercomplexes (SCs) in the inner mitochondrial membrane with a monomer or a dimer of cytochrome c oxidase (complex IV, CIV), resulting in 2 different assemblies (supercomplexes III(2)IV and III(2)IV(2)).

Its subcellular location is the mitochondrion inner membrane. Functionally, component of the ubiquinol-cytochrome c oxidoreductase, a multisubunit transmembrane complex that is part of the mitochondrial electron transport chain which drives oxidative phosphorylation. The complex plays an important role in the uptake of multiple carbon sources present in different host niches. The polypeptide is Cytochrome b-c1 complex reductase subunit, mitochondrial (Candida albicans (strain SC5314 / ATCC MYA-2876) (Yeast)).